The chain runs to 1651 residues: Roundabout homolog 1 (1651 aa).

Residues 1 to 25 (MKWKHLPLLVMISLLTLSKKHLLLA) form the signal peptide. The Extracellular segment spans residues 26–897 (QLIPDPEDLE…QQISDVVKQP (872 aa)). The tract at residues 31-66 (PEDLERGNDNGTPAPTSDNDDNSLGYTGSRLRQEDF) is disordered. Residues 39 to 56 (DNGTPAPTSDNDDNSLGY) show a composition bias toward polar residues. 5 consecutive Ig-like C2-type domains span residues 68–164 (PRIV…ASLE), 170–257 (DDFR…ADVT), 262–346 (PSFV…ATLT), 351–446 (PHFV…LEVT), and 455–541 (PVIR…AYIE). The cysteines at positions 89 and 147 are disulfide-linked. N-linked (GlcNAc...) asparagine glycosylation is present at asparagine 160. 3 disulfides stabilise this stretch: cysteine 191–cysteine 240, cysteine 283–cysteine 330, and cysteine 372–cysteine 428. N-linked (GlcNAc...) asparagine glycosylation is present at asparagine 463. Cysteine 476 and cysteine 525 are joined by a disulfide. 3 consecutive Fibronectin type-III domains span residues 563–657 (APSK…TQDV), 676–773 (VVLH…TLEE), and 778–874 (PPRS…LDSH). Residues asparagine 790, asparagine 820, and asparagine 827 are each glycosylated (N-linked (GlcNAc...) asparagine). A helical membrane pass occupies residues 898–918 (AFIAGIGAACWIILMVFSIWL). Topologically, residues 919 to 1651 (YRHRKKRNGL…NNEELEETES (733 aa)) are cytoplasmic. Residue serine 940 is modified to Phosphoserine. The residue at position 948 (threonine 948) is a Phosphothreonine. Tyrosine 1038 carries the post-translational modification Phosphotyrosine. Serine 1055 bears the Phosphoserine mark. Tyrosine 1073 bears the Phosphotyrosine mark. A disordered region spans residues 1086 to 1107 (NMNNGGGDSSEKHWKPPGQQKQ). Tyrosine 1114 carries the post-translational modification Phosphotyrosine. Disordered stretches follow at residues 1137–1337 (PYNH…ADME), 1352–1397 (EQTP…DGSF), and 1420–1651 (RRQM…ETES). The segment covering 1147–1163 (GGSYNSSDRGSSTSGSQ) has biased composition (low complexity). The segment covering 1186–1196 (LPPPPAHPPPH) has biased composition (pro residues). Threonine 1240 bears the Phosphothreonine mark. Positions 1255 to 1269 (YSHQSTATLTPSPQE) are enriched in polar residues. Residues 1281–1293 (DLGHMPHPPDRRR) show a composition bias toward basic and acidic residues. Over residues 1296-1307 (VSPPPPPRPISP) the composition is skewed to pro residues. Serine 1297 is modified (phosphoserine). The segment covering 1322–1336 (MDTDAPEEEEDEADM) has biased composition (acidic residues). Residues 1384 to 1397 (SSGRSSVSSSDGSF) are compositionally biased toward low complexity. Residues 1438–1451 (PRPTSPVSTDSNMS) are compositionally biased toward polar residues. The span at 1459 to 1470 (RPTKKQKHQPGH) shows a compositional bias: basic residues. Over residues 1480 to 1490 (LPPPPVPPPAI) the composition is skewed to pro residues. Composition is skewed to basic and acidic residues over residues 1516–1541 (ARAD…RQVT) and 1549–1573 (DPRE…RDLP). Polar residues predominate over residues 1592–1601 (FPTSNNPRDP). The span at 1602–1614 (SSSSSMSSRGSGS) shows a compositional bias: low complexity. Positions 1642–1651 (NNEELEETES) are enriched in acidic residues.

This sequence belongs to the immunoglobulin superfamily. ROBO family. As to quaternary structure, homodimer. Dimerization is mediated by the extracellular domain and is independent of SLIT liganding. Interacts with SLIT1. Interacts with SLIT2. Interacts with FLRT3. Interacts with MYO9B (via Rho-GAP domain). Post-translationally, ubiquitinated. May be deubiquitinated by USP33. Expressed in embryonal brain and spinal cord.

The protein localises to the cell membrane. The protein resides in the cell projection. Its subcellular location is the axon. It is found in the endoplasmic reticulum-Golgi intermediate compartment membrane. Receptor for SLIT1 and SLIT2 that mediates cellular responses to molecular guidance cues in cellular migration, including axonal navigation at the ventral midline of the neural tube and projection of axons to different regions during neuronal development. Interaction with the intracellular domain of FLRT3 mediates axon attraction towards cells expressing NTN1. In axon growth cones, the silencing of the attractive effect of NTN1 by SLIT2 may require the formation of a ROBO1-DCC complex. Plays a role in the regulation of cell migration via its interaction with MYO9B; inhibits MYO9B-mediated stimulation of RHOA GTPase activity, and thereby leads to increased levels of active, GTP-bound RHOA. May be required for lung development. The chain is Roundabout homolog 1 (Robo1) from Rattus norvegicus (Rat).